We begin with the raw amino-acid sequence, 320 residues long: tRNA-cytidine(32) 2-sulfurtransferase (320 aa).

Residues 54-59 (SGGKDS) carry the PP-loop motif motif. Cys129, Cys132, and Cys220 together coordinate [4Fe-4S] cluster.

It belongs to the TtcA family. Homodimer. Requires Mg(2+) as cofactor. It depends on [4Fe-4S] cluster as a cofactor.

The protein resides in the cytoplasm. The enzyme catalyses cytidine(32) in tRNA + S-sulfanyl-L-cysteinyl-[cysteine desulfurase] + AH2 + ATP = 2-thiocytidine(32) in tRNA + L-cysteinyl-[cysteine desulfurase] + A + AMP + diphosphate + H(+). It functions in the pathway tRNA modification. Functionally, catalyzes the ATP-dependent 2-thiolation of cytidine in position 32 of tRNA, to form 2-thiocytidine (s(2)C32). The sulfur atoms are provided by the cysteine/cysteine desulfurase (IscS) system. In Bordetella bronchiseptica (strain ATCC BAA-588 / NCTC 13252 / RB50) (Alcaligenes bronchisepticus), this protein is tRNA-cytidine(32) 2-sulfurtransferase.